Here is a 526-residue protein sequence, read N- to C-terminus: Probable di/tripeptide-binding protein 5 (526 aa).

The N-terminal stretch at 1–21 (MRLAAFSLFLAPLLLAQPAAA) is a signal peptide.

The protein belongs to the bacterial solute-binding protein 5 family. The complex is composed of two ATP-binding proteins (DppD and DppF), two transmembrane proteins (DppB and DppC) and a solute-binding protein (DppA5). Five orthologous SBPs (DppA1-A5) are present in P.aeruginosa, which increases the substrate specificity of the DppBCDF transporter.

In terms of biological role, part of the ABC transporter DppABCDF involved in the uptake of various di/tripeptides. This chain is Probable di/tripeptide-binding protein 5, found in Pseudomonas aeruginosa (strain UCBPP-PA14).